The chain runs to 370 residues: Cytochrome b (370 aa).

The next 4 membrane-spanning stretches (helical) occupy residues Phe25–Val45, Trp69–Ile90, Trp105–Leu125, and Phe170–Leu190. Heme b is bound by residues His75 and His89. Positions 174 and 188 each coordinate heme b. Residue His193 participates in a ubiquinone binding. A run of 4 helical transmembrane segments spans residues Tyr218–Phe238, Leu280–His300, Phe312–Thr332, and Phe339–Pro358.

This sequence belongs to the cytochrome b family. As to quaternary structure, the cytochrome bc1 complex contains 3 respiratory subunits (MT-CYB, CYC1 and UQCRFS1), 2 core proteins (UQCRC1 and UQCRC2) and probably 6 low-molecular weight proteins. Requires heme b as cofactor.

The protein resides in the mitochondrion inner membrane. Its function is as follows. Component of the ubiquinol-cytochrome c reductase complex (complex III or cytochrome b-c1 complex) that is part of the mitochondrial respiratory chain. The b-c1 complex mediates electron transfer from ubiquinol to cytochrome c. Contributes to the generation of a proton gradient across the mitochondrial membrane that is then used for ATP synthesis. In Chilabothrus strigilatus fosteri (Bimini Island boa constrictor), this protein is Cytochrome b (MT-CYB).